Consider the following 291-residue polypeptide: Polyamine aminopropyltransferase (291 aa).

Positions 5–245 (PGPVSLIEPL…YAVNYIIGSL (241 aa)) constitute a PABS domain. Residue Gln36 participates in S-methyl-5'-thioadenosine binding. Positions 67 and 91 each coordinate spermidine. S-methyl-5'-thioadenosine is bound by residues Asp111 and 143–144 (DG). Residue Asp164 is the Proton acceptor of the active site.

Belongs to the spermidine/spermine synthase family. In terms of assembly, homodimer or homotetramer.

The protein localises to the cytoplasm. The enzyme catalyses S-adenosyl 3-(methylsulfanyl)propylamine + putrescine = S-methyl-5'-thioadenosine + spermidine + H(+). It participates in amine and polyamine biosynthesis; spermidine biosynthesis; spermidine from putrescine: step 1/1. Catalyzes the irreversible transfer of a propylamine group from the amino donor S-adenosylmethioninamine (decarboxy-AdoMet) to putrescine (1,4-diaminobutane) to yield spermidine. This chain is Polyamine aminopropyltransferase, found in Pyrobaculum islandicum (strain DSM 4184 / JCM 9189 / GEO3).